The primary structure comprises 35 residues: Mu/omega-theraphotoxin-Tap1a (35 aa).

3 cysteine pairs are disulfide-bonded: Cys-3–Cys-18, Cys-10–Cys-23, and Cys-17–Cys-30.

The protein belongs to the neurotoxin 10 (Hwtx-1) family. 59 (Tltx) subfamily. In terms of tissue distribution, expressed by the venom gland.

Its subcellular location is the secreted. Functionally, gating-modifier toxin that inhibits both sodium (Nav) and calcium (Cav3) channels by inducing hyperpolarizing shift in voltage-dependence of activation and steady state inactivation. Inhibits Nav1.1/SCN1A, Nav1.2/SCN2A, Nav1.3/SCN3A, Nav1.6/SCN6A, Nav1.7/SCN9A and Cav3.1/CACNA1G sodium and calcium channels at nanomolar concentrations (IC(50)=81-301 nM). Surprisingly, selectively slows fast inactivation of Nav1.3/SCN3A. Also shows moderate inhibition of Cav3.2/CACNA1H calcium channels (IC(50)=1233 nM). Ex vivo, nearly ablates neuronal mechanosensitivity in afferent fibers innervating the colon and the bladder. In vivo, in a mouse model of irritable bowel syndrome, intracolonic administration of the toxin reverses colonic mechanical hypersensitivity. The polypeptide is Mu/omega-theraphotoxin-Tap1a (Theraphosa apophysis (Goliath pinkfoot tarantula)).